Here is a 312-residue protein sequence, read N- to C-terminus: uncharacterized protein (312 aa).

Residues 1 to 14 lie on the Extracellular side of the membrane; that stretch reads MSIVETCISFVSTN. The chain crosses the membrane as a helical span at residues 15–35; sequence PFYPFCTGLLLNCVVTPLYFW. Over 36–41 the chain is Cytoplasmic; the sequence is KTQNGR. A helical membrane pass occupies residues 42–62; sequence IVVVSLLQFVVLYATAFISIG. The Extracellular segment spans residues 63–179; it reads TDKSLYRNKW…LEYDQDTATE (117 aa). Residues 70-173 enclose the FAD-binding FR-type domain; it reads NKWVALPLSK…KGPLGELEYD (104 aa). The helical transmembrane segment at 180–200 threads the bilayer; sequence LGIIAGGSGITPVLQVLQEII. Topologically, residues 201-312 are cytoplasmic; the sequence is PSPEDLTHIS…GNGTDKVFVF (112 aa).

This sequence belongs to the flavoprotein pyridine nucleotide cytochrome reductase family. FAD serves as cofactor.

The protein resides in the membrane. This is an uncharacterized protein from Saccharomyces cerevisiae (strain ATCC 204508 / S288c) (Baker's yeast).